The sequence spans 460 residues: DL-alanine permease SerP2 (460 aa).

Helical transmembrane passes span L26–H46, L47–L67, F98–I118, F124–L144, F160–F180, F209–T229, Q246–Y266, F278–V298, A344–I364, F368–I388, H410–F430, and T433–F453.

The protein belongs to the amino acid-polyamine-organocation (APC) superfamily. Amino acid transporter (AAT) (TC 2.A.3.1) family.

The protein resides in the cell membrane. Transports DL-alanine, DL-serine and glycine. The preferred substrate is DL-alanine. L-serine is a low-affinity substrate. The sequence is that of DL-alanine permease SerP2 from Lactococcus lactis subsp. cremoris (strain MG1363).